The chain runs to 107 residues: Ribonuclease P protein component 4 (107 aa).

Residues C62, C65, C87, and C90 each coordinate Zn(2+).

The protein belongs to the eukaryotic/archaeal RNase P protein component 4 family. In terms of assembly, consists of a catalytic RNA component and at least 4-5 protein subunits. Requires Zn(2+) as cofactor.

Its subcellular location is the cytoplasm. The enzyme catalyses Endonucleolytic cleavage of RNA, removing 5'-extranucleotides from tRNA precursor.. Its function is as follows. Part of ribonuclease P, a protein complex that generates mature tRNA molecules by cleaving their 5'-ends. The chain is Ribonuclease P protein component 4 from Archaeoglobus fulgidus (strain ATCC 49558 / DSM 4304 / JCM 9628 / NBRC 100126 / VC-16).